The chain runs to 251 residues: uncharacterized protein (251 aa).

The RING-type zinc-finger motif lies at 192–238; that stretch reads CMMCVQRGDERVAITTPYTTDCGHTYCYACIMSRLKLVNNVSCPICK.

The protein localises to the cytoplasm. This is an uncharacterized protein from Schizosaccharomyces pombe (strain 972 / ATCC 24843) (Fission yeast).